A 368-amino-acid chain; its full sequence is High affinity iron permease 1 (368 aa).

Helical transmembrane passes span 8-28, 50-70, 86-106, 142-162, 173-193, 204-224, and 287-307; these read VPIF…ISVL, VWIG…AFIA, IWEG…GLAM, AFFV…VVFI, SIPI…FLIY, FFVF…AKGV, and SIIS…FSYF. A disordered region spans residues 346–368; that stretch reads DKESDEEANNHPKEKIESDAIKA. Residues 353 to 368 are compositionally biased toward basic and acidic residues; the sequence is ANNHPKEKIESDAIKA.

Belongs to the oxidase-dependent Fe transporter (OFeT) (TC 9.A.10.1) family.

It localises to the cell membrane. Its function is as follows. High affinity iron permease required for iron uptake in iron-depleted environments. Required for full virulence in mice. This is High affinity iron permease 1 from Rhizopus delemar (strain RA 99-880 / ATCC MYA-4621 / FGSC 9543 / NRRL 43880) (Mucormycosis agent).